We begin with the raw amino-acid sequence, 393 residues long: Protein FAM53C (393 aa).

At M1 the chain carries N-acetylmethionine. The disordered stretch occupies residues 77–120; sequence HLRPPSRGNSPKEPPLSQVLSPEPPDPEKLPVPPAPPSKRHCRS. Residues S122 and S162 each carry the phosphoserine modification. Disordered regions lie at residues 141-167 and 204-283; these read LWTP…PKRV and QPCA…ARKT. The segment covering 204 to 215 has biased composition (polar residues); sequence QPCATSPQSGSW. Phosphoserine is present on residues S232, S234, S255, S273, and S299. Residues 241 to 256 show a composition bias toward low complexity; it reads ASRFLPSARSSPASSP. Residues 343-355 show a composition bias toward low complexity; the sequence is SCSPVEGSSQVLS. The disordered stretch occupies residues 343-365; it reads SCSPVEGSSQVLSESEEEEEGSV.

The protein belongs to the FAM53 family.

This chain is Protein FAM53C, found in Mus musculus (Mouse).